The sequence spans 165 residues: Chorismate pyruvate-lyase (165 aa).

Positions 35, 77, 115, and 156 each coordinate substrate.

The protein belongs to the UbiC family. In terms of assembly, monomer.

The protein localises to the cytoplasm. It carries out the reaction chorismate = 4-hydroxybenzoate + pyruvate. The protein operates within cofactor biosynthesis; ubiquinone biosynthesis. Removes the pyruvyl group from chorismate, with concomitant aromatization of the ring, to provide 4-hydroxybenzoate (4HB) for the ubiquinone pathway. In Shigella sonnei (strain Ss046), this protein is Chorismate pyruvate-lyase.